A 141-amino-acid polypeptide reads, in one-letter code: MSTDDSPYKQAFSLFDRHGTGRIPKTSIGDLLRACGQNPTLAEITEIESTLPAEVDMEQFLQVLNRPNGFDMPGDPEEFVKGFQVFDKDATGMIGVGELRYVLTSLGEKLSNEEMDELLKGVPVKDGMVNYHDFVQMILAN.

2 positions are modified to phosphoserine: serine 2 and serine 6. 3 consecutive EF-hand domains span residues 3-38, 74-109, and 109-141; these read TDDSPYKQAFSLFDRHGTGRIPKTSIGDLLRACGQN, GDPEEFVKGFQVFDKDATGMIGVGELRYVLTSLGEK, and KLSNEEMDELLKGVPVKDGMVNYHDFVQMILAN. Ca(2+)-binding residues include aspartate 87, aspartate 89, threonine 91, methionine 93, and glutamate 98.

In terms of assembly, binds to myosin II chains myo2 and myo3. Interacts with vps27 and a PI 4-kinase pik1. Phosphorylated on either Ser-2 or Ser-6 but not both. Phosphorylation is not essential for the function of the protein.

It localises to the cytoplasm. In terms of biological role, involved in cytokinesis. Required for the formation and function of the contractile ring. In Schizosaccharomyces pombe (strain 972 / ATCC 24843) (Fission yeast), this protein is Myosin regulatory light chain cdc4 (cdc4).